Reading from the N-terminus, the 168-residue chain is 6,7-dimethyl-8-ribityllumazine synthase (168 aa).

Residues Phe-24, 58–60 (ALE), and 82–84 (AVI) contribute to the 5-amino-6-(D-ribitylamino)uracil site. Residue 87–88 (ET) coordinates (2S)-2-hydroxy-3-oxobutyl phosphate. His-90 (proton donor) is an active-site residue. Asn-115 serves as a coordination point for 5-amino-6-(D-ribitylamino)uracil. Position 129 (Arg-129) interacts with (2S)-2-hydroxy-3-oxobutyl phosphate.

This sequence belongs to the DMRL synthase family.

The enzyme catalyses (2S)-2-hydroxy-3-oxobutyl phosphate + 5-amino-6-(D-ribitylamino)uracil = 6,7-dimethyl-8-(1-D-ribityl)lumazine + phosphate + 2 H2O + H(+). Its pathway is cofactor biosynthesis; riboflavin biosynthesis; riboflavin from 2-hydroxy-3-oxobutyl phosphate and 5-amino-6-(D-ribitylamino)uracil: step 1/2. Catalyzes the formation of 6,7-dimethyl-8-ribityllumazine by condensation of 5-amino-6-(D-ribitylamino)uracil with 3,4-dihydroxy-2-butanone 4-phosphate. This is the penultimate step in the biosynthesis of riboflavin. This is 6,7-dimethyl-8-ribityllumazine synthase from Paraburkholderia xenovorans (strain LB400).